The following is a 394-amino-acid chain: Deoxyguanosinetriphosphate triphosphohydrolase-like protein (394 aa).

The disordered stretch occupies residues 1–36 (MSQAPYFVPRAPYAEDPSKSKGRRFKEDESRTRTPF). Positions 25–36 (FKEDESRTRTPF) are enriched in basic and acidic residues. The HD domain occupies 70-210 (RLTHTLEVAQ…AALADDIAYN (141 aa)).

This sequence belongs to the dGTPase family. Type 2 subfamily.

This chain is Deoxyguanosinetriphosphate triphosphohydrolase-like protein, found in Caulobacter vibrioides (strain ATCC 19089 / CIP 103742 / CB 15) (Caulobacter crescentus).